Reading from the N-terminus, the 346-residue chain is Phosphate acyltransferase (346 aa).

This sequence belongs to the PlsX family. As to quaternary structure, homodimer. Probably interacts with PlsY.

It is found in the cytoplasm. The enzyme catalyses a fatty acyl-[ACP] + phosphate = an acyl phosphate + holo-[ACP]. It participates in lipid metabolism; phospholipid metabolism. Catalyzes the reversible formation of acyl-phosphate (acyl-PO(4)) from acyl-[acyl-carrier-protein] (acyl-ACP). This enzyme utilizes acyl-ACP as fatty acyl donor, but not acyl-CoA. The polypeptide is Phosphate acyltransferase (Brucella ovis (strain ATCC 25840 / 63/290 / NCTC 10512)).